We begin with the raw amino-acid sequence, 457 residues long: Cell division protein FtsZ (457 aa).

GTP-binding positions include 26–30 (GGGGN), 115–117 (GTG), Glu-146, Lys-150, and Asp-193. The segment covering 429–447 (KKDVVRSEESERPAFESER) has biased composition (basic and acidic residues). Residues 429–457 (KKDVVRSEESERPAFESERSSSPTTISFN) are disordered. The span at 448–457 (SSSPTTISFN) shows a compositional bias: polar residues.

The protein belongs to the FtsZ family. As to quaternary structure, homodimer. Polymerizes to form a dynamic ring structure in a strictly GTP-dependent manner. Interacts directly with several other division proteins.

Its subcellular location is the cytoplasm. Functionally, essential cell division protein that forms a contractile ring structure (Z ring) at the future cell division site. The regulation of the ring assembly controls the timing and the location of cell division. One of the functions of the FtsZ ring is to recruit other cell division proteins to the septum to produce a new cell wall between the dividing cells. Binds GTP and shows GTPase activity. This chain is Cell division protein FtsZ, found in Porphyromonas gingivalis (strain ATCC BAA-308 / W83).